We begin with the raw amino-acid sequence, 137 residues long: Regulator of cell cycle RGCC (137 aa).

Disordered stretches follow at residues 1-20 (MKPPAAQGSPAAAAAAAPAL) and 57-80 (LERMKRRSSASVSDSSGFSDSESA). Positions 65-80 (SASVSDSSGFSDSESA) are enriched in low complexity. A phosphoserine mark is found at serine 67, serine 69, serine 71, serine 75, serine 91, and serine 97. Threonine 111 is subject to Phosphothreonine; by CDK1.

As to quaternary structure, interacts with SMAD3. Interacts with CDK1 and PLK1. As to expression, detected in brain, heart and liver (at protein level). Highly expressed in liver, skeletal muscle, kidney and pancreas. Detected at lower levels in heart, brain and placenta. Detected in aorta endothelial cells. Overexpressed in colon, breast, prostate, bladder, lung, and ovarian cancer tissues.

Its subcellular location is the cytoplasm. The protein resides in the nucleus. It localises to the cytoskeleton. The protein localises to the microtubule organizing center. It is found in the centrosome. Its function is as follows. Modulates the activity of cell cycle-specific kinases. Enhances CDK1 activity. May contribute to the regulation of the cell cycle. May inhibit growth of glioma cells by promoting arrest of mitotic progression at the G2/M transition. Fibrogenic factor contributing to the pathogenesis of renal fibrosis through fibroblast activation. In Homo sapiens (Human), this protein is Regulator of cell cycle RGCC (RGCC).